Reading from the N-terminus, the 227-residue chain is Cytochrome c oxidase subunit 2 (227 aa).

Over 1–14 (MAYPLQLGFQDAVS) the chain is Mitochondrial intermembrane. Residues 15-45 (PIMEELLYFHDHTLMIVFLISSLVLYIITLM) form a helical membrane-spanning segment. Over 46 to 59 (LTTKLTHTNTMNAQ) the chain is Mitochondrial matrix. Residues 60-87 (EVETVWTILPAIILILIALPSLRILYMM) form a helical membrane-spanning segment. The Mitochondrial intermembrane segment spans residues 88-227 (DEINNPSLTV…TFEKWTASLL (140 aa)). Cu cation is bound by residues His-161, Cys-196, Glu-198, Cys-200, His-204, and Met-207. Mg(2+) is bound at residue Glu-198.

It belongs to the cytochrome c oxidase subunit 2 family. As to quaternary structure, component of the cytochrome c oxidase (complex IV, CIV), a multisubunit enzyme composed of 14 subunits. The complex is composed of a catalytic core of 3 subunits MT-CO1, MT-CO2 and MT-CO3, encoded in the mitochondrial DNA, and 11 supernumerary subunits COX4I, COX5A, COX5B, COX6A, COX6B, COX6C, COX7A, COX7B, COX7C, COX8 and NDUFA4, which are encoded in the nuclear genome. The complex exists as a monomer or a dimer and forms supercomplexes (SCs) in the inner mitochondrial membrane with NADH-ubiquinone oxidoreductase (complex I, CI) and ubiquinol-cytochrome c oxidoreductase (cytochrome b-c1 complex, complex III, CIII), resulting in different assemblies (supercomplex SCI(1)III(2)IV(1) and megacomplex MCI(2)III(2)IV(2)). Found in a complex with TMEM177, COA6, COX18, COX20, SCO1 and SCO2. Interacts with TMEM177 in a COX20-dependent manner. Interacts with COX20. Interacts with COX16. Requires Cu cation as cofactor.

The protein localises to the mitochondrion inner membrane. It carries out the reaction 4 Fe(II)-[cytochrome c] + O2 + 8 H(+)(in) = 4 Fe(III)-[cytochrome c] + 2 H2O + 4 H(+)(out). Component of the cytochrome c oxidase, the last enzyme in the mitochondrial electron transport chain which drives oxidative phosphorylation. The respiratory chain contains 3 multisubunit complexes succinate dehydrogenase (complex II, CII), ubiquinol-cytochrome c oxidoreductase (cytochrome b-c1 complex, complex III, CIII) and cytochrome c oxidase (complex IV, CIV), that cooperate to transfer electrons derived from NADH and succinate to molecular oxygen, creating an electrochemical gradient over the inner membrane that drives transmembrane transport and the ATP synthase. Cytochrome c oxidase is the component of the respiratory chain that catalyzes the reduction of oxygen to water. Electrons originating from reduced cytochrome c in the intermembrane space (IMS) are transferred via the dinuclear copper A center (CU(A)) of subunit 2 and heme A of subunit 1 to the active site in subunit 1, a binuclear center (BNC) formed by heme A3 and copper B (CU(B)). The BNC reduces molecular oxygen to 2 water molecules using 4 electrons from cytochrome c in the IMS and 4 protons from the mitochondrial matrix. The sequence is that of Cytochrome c oxidase subunit 2 (MT-CO2) from Hippopotamus amphibius (Hippopotamus).